The following is a 441-amino-acid chain: Malate dehydrogenase [NADP], chloroplastic (441 aa).

A chloroplast-targeting transit peptide spans 1 to 58 (MALTQLNSTCSKPQLHSSSQLSFLSRTRTRTLPRHYHSTFAPLHRTQHARISCSVAPN). Cysteine 76 and cysteine 81 are joined by a disulfide. 105 to 111 (GAAGMIS) serves as a coordination point for NADP(+). Substrate is bound by residues arginine 186 and arginine 192. Residue asparagine 199 participates in NADP(+) binding. An NAD(+)-binding site is contributed by glutamine 206. 223–225 (VGN) is a binding site for NADP(+). The substrate site is built by asparagine 225 and arginine 256. Histidine 281 serves as the catalytic Proton acceptor. A disulfide bond links cysteine 417 and cysteine 429.

It belongs to the LDH/MDH superfamily. MDH type 2 family. Homodimer.

It is found in the plastid. It localises to the chloroplast. It carries out the reaction (S)-malate + NADP(+) = oxaloacetate + NADPH + H(+). Chloroplast NADP-MDH is activated upon illumination. In order to be enzymatically active, disulfide bridges on the protein must be reduced by thioredoxin which receives electrons from ferredoxin and the electron transport system of photosynthesis. The chloroplastic, NADP-dependent form is essential for the photosynthesis C4 cycle, which allows plants to circumvent the problem of photorespiration. In C4 plants, NADP-MDH activity acts to convert oxaloacetate to malate in chloroplasts of mesophyll cells for transport to the bundle sheath cells. This chain is Malate dehydrogenase [NADP], chloroplastic, found in Pisum sativum (Garden pea).